A 281-amino-acid polypeptide reads, in one-letter code: 2,3,4,5-tetrahydropyridine-2,6-dicarboxylate N-succinyltransferase (281 aa).

Arg-108 and Asp-145 together coordinate substrate.

The protein belongs to the transferase hexapeptide repeat family. In terms of assembly, homotrimer.

It localises to the cytoplasm. It carries out the reaction (S)-2,3,4,5-tetrahydrodipicolinate + succinyl-CoA + H2O = (S)-2-succinylamino-6-oxoheptanedioate + CoA. The protein operates within amino-acid biosynthesis; L-lysine biosynthesis via DAP pathway; LL-2,6-diaminopimelate from (S)-tetrahydrodipicolinate (succinylase route): step 1/3. This Rhodopseudomonas palustris (strain BisB5) protein is 2,3,4,5-tetrahydropyridine-2,6-dicarboxylate N-succinyltransferase.